The chain runs to 213 residues: Probable anti-sigma-F factor NrsF (213 aa).

6 helical membrane passes run 27-47, 51-71, 91-111, 126-146, 159-179, and 187-207; these read ALAI…LLQV, LGLA…TCLA, VPAA…FTLI, TWKS…AAVL, LAGF…YCLH, and FIGF…VLLG.

Belongs to the NrsF anti-sigma-F factor family.

It is found in the cell inner membrane. Functionally, probably an anti-sigma factor for extracytoplasmic function (ECF) sigma factor sigma-F (SigF), which responds to (hypo)chlorite. ECF sigma factors are held in an inactive form by a cognate anti-sigma factor. This chain is Probable anti-sigma-F factor NrsF, found in Azospira oryzae (strain ATCC BAA-33 / DSM 13638 / PS) (Dechlorosoma suillum).